A 76-amino-acid chain; its full sequence is MGLKMSCLKGFQMCVSSSSSSHDEAPVLNDKHLDVPDIIITPPTPTGMMLPRDLGSTVWLDETGSCPDDGEIDPEA.

The tract at residues 36 to 41 (PDIIIT) is required for interaction with PPP3CA. Threonine 44 and threonine 46 each carry phosphothreonine.

Interacts (via PxIxIT motif, when phosphorylated on Thr-44) with PPP3CA. Not expressed in pancreatic duct cells (at protein level). Abundantly expressed in the pancreas and weakly expressed in the thyroid. In terms of tissue distribution, not expressed in pancreatic duct cells (at protein level). Abundantly expressed in the lymph node and weakly expressed in the stomach, trachea and bone marrow.

This is an uncharacterized protein from Homo sapiens (Human).